The following is a 68-amino-acid chain: MQVSVRDNNVDQALRALKKKLQREGVFREMKLKQHYEKPSEKKAREKAEAIRRARKLARKKAQREGGL.

Belongs to the bacterial ribosomal protein bS21 family.

The protein is Small ribosomal subunit protein bS21 of Dinoroseobacter shibae (strain DSM 16493 / NCIMB 14021 / DFL 12).